A 1902-amino-acid chain; its full sequence is Putative surface cell antigen sca1 (1902 aa).

The signal sequence occupies residues 1–28 (MNKLTEQHLLKKSRFLKYSLLASISVGA). Disordered regions lie at residues 140–273 (GIEK…TFVP), 420–485 (QGVF…SRTA), 707–729 (TTTT…YSSS), 858–885 (NRRR…AWGN), and 1470–1548 (KSES…SDGD). Composition is skewed to polar residues over residues 146–159 (QSQN…TEQM) and 168–197 (TASS…SPEH). A compositionally biased stretch (low complexity) spans 199 to 212 (TTAPGTPSSTPATP). Positions 225-238 (LGANTPPNINTNSK) are enriched in polar residues. Positions 246–264 (SSSGPQQQAVQSSSQVKSE) are enriched in low complexity. The span at 423–439 (FNKNKSSGGNARKSSAG) shows a compositional bias: polar residues. A compositionally biased stretch (basic and acidic residues) spans 445 to 482 (KKQEAQKQLSEIKKQEKAIKTASDKAKEVAASAKKETS). Over residues 863 to 874 (RDGETSKQRTVD) the composition is skewed to basic and acidic residues. The span at 1491–1507 (LSSLPALASSNESALAL) shows a compositional bias: low complexity. Acidic residues predominate over residues 1521-1538 (SSEDEESYDSGFEEEEET). One can recognise an Autotransporter domain in the interval 1618-1902 (ESHIKRGLWM…QGSVKLKVNL (285 aa)).

It is found in the cell outer membrane. The chain is Putative surface cell antigen sca1 (sca1) from Rickettsia conorii (strain ATCC VR-613 / Malish 7).